We begin with the raw amino-acid sequence, 48 residues long: Cathepsin B (48 aa).

It belongs to the peptidase C1 family. As to quaternary structure, dimer of a heavy chain and a light chain cross-linked by a disulfide bond.

The protein resides in the lysosome. It carries out the reaction Hydrolysis of proteins with broad specificity for peptide bonds. Preferentially cleaves -Arg-Arg-|-Xaa bonds in small molecule substrates (thus differing from cathepsin L). In addition to being an endopeptidase, shows peptidyl-dipeptidase activity, liberating C-terminal dipeptides.. Functionally, thiol protease which is believed to participate in intracellular degradation and turnover of proteins. Has also been implicated in tumor invasion and metastasis. This chain is Cathepsin B (CTSB), found in Coturnix japonica (Japanese quail).